We begin with the raw amino-acid sequence, 86 residues long: Cytochrome c oxidase subunit 6B1 (86 aa).

Alanine 2 carries the post-translational modification N-acetylalanine. The CHCH domain maps to 27–73; the sequence is TRNCWQNYLDFHRCQKAMTAKGGDISVCEWYQRVYQSLCPTSWVTDW. The Cx9C motif signature appears at 30–40; that stretch reads CWQNYLDFHRC. Disulfide bonds link cysteine 30/cysteine 65 and cysteine 40/cysteine 54. A Cx10C motif motif is present at residues 54–65; the sequence is CEWYQRVYQSLC.

The protein belongs to the cytochrome c oxidase subunit 6B family. As to quaternary structure, component of the cytochrome c oxidase (complex IV, CIV), a multisubunit enzyme composed of 14 subunits. The complex is composed of a catalytic core of 3 subunits MT-CO1, MT-CO2 and MT-CO3, encoded in the mitochondrial DNA, and 11 supernumerary subunits COX4I, COX5A, COX5B, COX6A, COX6B, COX6C, COX7A, COX7B, COX7C, COX8 and NDUFA4, which are encoded in the nuclear genome. The complex exists as a monomer or a dimer and forms supercomplexes (SCs) in the inner mitochondrial membrane with NADH-ubiquinone oxidoreductase (complex I, CI) and ubiquinol-cytochrome c oxidoreductase (cytochrome b-c1 complex, complex III, CIII), resulting in different assemblies (supercomplex SCI(1)III(2)IV(1) and megacomplex MCI(2)III(2)IV(2)).

It is found in the mitochondrion inner membrane. It functions in the pathway energy metabolism; oxidative phosphorylation. Functionally, component of the cytochrome c oxidase, the last enzyme in the mitochondrial electron transport chain which drives oxidative phosphorylation. The respiratory chain contains 3 multisubunit complexes succinate dehydrogenase (complex II, CII), ubiquinol-cytochrome c oxidoreductase (cytochrome b-c1 complex, complex III, CIII) and cytochrome c oxidase (complex IV, CIV), that cooperate to transfer electrons derived from NADH and succinate to molecular oxygen, creating an electrochemical gradient over the inner membrane that drives transmembrane transport and the ATP synthase. Cytochrome c oxidase is the component of the respiratory chain that catalyzes the reduction of oxygen to water. Electrons originating from reduced cytochrome c in the intermembrane space (IMS) are transferred via the dinuclear copper A center (CU(A)) of subunit 2 and heme A of subunit 1 to the active site in subunit 1, a binuclear center (BNC) formed by heme A3 and copper B (CU(B)). The BNC reduces molecular oxygen to 2 water molecules using 4 electrons from cytochrome c in the IMS and 4 protons from the mitochondrial matrix. This chain is Cytochrome c oxidase subunit 6B1 (COX6B1), found in Pongo abelii (Sumatran orangutan).